A 1329-amino-acid polypeptide reads, in one-letter code: BRCT domain-containing protein At4g02110 (1329 aa).

BRCT domains are found at residues 7-97 (LPPK…SILY) and 104-194 (NGIP…DYEI). Disordered regions lie at residues 295–378 (ANKT…SMER), 393–470 (GEEF…TSEL), 576–645 (EVPE…SPTD), 745–827 (NDVP…ADGK), and 952–1077 (AKKE…KESK). Composition is skewed to polar residues over residues 323 to 335 (SLAT…LQRS) and 363 to 378 (SAFN…SMER). 2 stretches are compositionally biased toward basic and acidic residues: residues 410-422 (VSRK…HHNS) and 600-611 (RMKDKQETELTT). Basic residues predominate over residues 793–802 (GKSRVKKTKI). Composition is skewed to basic and acidic residues over residues 818–827 (DGGDNSADGK) and 971–983 (DDNK…EGIV). The segment covering 986–1004 (SSLQSGKKGSSSRVEVGKS) has biased composition (low complexity). Basic and acidic residues predominate over residues 1024–1047 (VMKDVGDNSAKEKENIAVDNESRK). The region spanning 1090 to 1181 (FQDQEHEPKF…KLLQEEPYEW (92 aa)) is the BRCT 3 domain.

This chain is BRCT domain-containing protein At4g02110, found in Arabidopsis thaliana (Mouse-ear cress).